The following is a 185-amino-acid chain: Ribosome-recycling factor (185 aa).

This sequence belongs to the RRF family.

Its subcellular location is the cytoplasm. In terms of biological role, responsible for the release of ribosomes from messenger RNA at the termination of protein biosynthesis. May increase the efficiency of translation by recycling ribosomes from one round of translation to another. The protein is Ribosome-recycling factor of Finegoldia magna (strain ATCC 29328 / DSM 20472 / WAL 2508) (Peptostreptococcus magnus).